Consider the following 24-residue polypeptide: Neurotoxin 5 (24 aa).

Positions 2-24 (RDAYIAQNYNCVYTCFKNDYCND) constitute an LCN-type CS-alpha/beta domain.

Belongs to the long (4 C-C) scorpion toxin superfamily. Sodium channel inhibitor family. Alpha subfamily. Expressed by the venom gland.

It is found in the secreted. Binds to sodium channels (Nav) and inhibits the inactivation of the activated channels, thereby blocking neuronal transmission. This chain is Neurotoxin 5, found in Buthus occitanus tunetanus (Common European scorpion).